A 460-amino-acid polypeptide reads, in one-letter code: MMLEGYTVQPPQSTLIGDIEIQDENANQEVKNVLYQGVQKGIKRLEKRQRRVALGDVTSQKANKIHNAIHNKFHQTKNNFEIENIRSSALVKEQQRDVRHEDSDYFLIDSSEGSSTDDEQVNEDAIDDLLSRRVNDQQIQADEVYEDFDGEMQDVIEEDVDSQIEPLSPINNDEIQTELDRAFEKYFRSVPNPLDDDTHDVVMVVEYASDIFYYLRELEVKYRPNPYYMQNQVELTWPFRRTMIDWLVQLHFRFQLLPETLYLTINIVDRFLSKKTVTLNRFQLVGVSALFIAAKFEEINCPTLDDLVYMLENTYTRDDIIRAEQYMIDTLEFEIGWPGPMPFLRRISKADDYDFEPRTLAKYLLETTIVEPKLVAAAPSWLAAGAYFLSRTILGSNDWSLKHVFYSGYTSSQIIPLASLILENCKNASRRHHSIWKKYFDQKHYRCSQIVEEWIVSTEA.

This sequence belongs to the cyclin family. Cyclin AB subfamily.

Essential for the control of the cell cycle at the G2/M (mitosis) transition. Interacts with the CDC2 protein kinase to form MPF. G2/M cyclins accumulate steadily during G2 and are abruptly destroyed at mitosis. This is G2/mitotic-specific cyclin-4 (CLB4) from Saccharomyces cerevisiae (strain ATCC 204508 / S288c) (Baker's yeast).